Reading from the N-terminus, the 490-residue chain is Aspartyl/glutamyl-tRNA(Asn/Gln) amidotransferase subunit B (490 aa).

It belongs to the GatB/GatE family. GatB subfamily. Heterotrimer of A, B and C subunits.

The catalysed reaction is L-glutamyl-tRNA(Gln) + L-glutamine + ATP + H2O = L-glutaminyl-tRNA(Gln) + L-glutamate + ADP + phosphate + H(+). It catalyses the reaction L-aspartyl-tRNA(Asn) + L-glutamine + ATP + H2O = L-asparaginyl-tRNA(Asn) + L-glutamate + ADP + phosphate + 2 H(+). Functionally, allows the formation of correctly charged Asn-tRNA(Asn) or Gln-tRNA(Gln) through the transamidation of misacylated Asp-tRNA(Asn) or Glu-tRNA(Gln) in organisms which lack either or both of asparaginyl-tRNA or glutaminyl-tRNA synthetases. The reaction takes place in the presence of glutamine and ATP through an activated phospho-Asp-tRNA(Asn) or phospho-Glu-tRNA(Gln). In Synechococcus sp. (strain JA-2-3B'a(2-13)) (Cyanobacteria bacterium Yellowstone B-Prime), this protein is Aspartyl/glutamyl-tRNA(Asn/Gln) amidotransferase subunit B.